The following is a 1232-amino-acid chain: DNA-directed RNA polymerase subunit beta (1232 aa).

A disordered region spans residues 1170-1232; sequence SVDEDADELE…LDLDDFGDEH (63 aa). The segment covering 1171 to 1180 has biased composition (acidic residues); sequence VDEDADELEV. The segment covering 1189–1198 has biased composition (basic and acidic residues); that stretch reads PEEKEEKEKE. Residues 1199 to 1232 show a composition bias toward acidic residues; that stretch reads DSDEYDDLREEDVEPDLEELSLDDLDLDDFGDEH.

The protein belongs to the RNA polymerase beta chain family. In terms of assembly, the RNAP catalytic core consists of 2 alpha, 1 beta, 1 beta' and 1 omega subunit. When a sigma factor is associated with the core the holoenzyme is formed, which can initiate transcription.

It carries out the reaction RNA(n) + a ribonucleoside 5'-triphosphate = RNA(n+1) + diphosphate. DNA-dependent RNA polymerase catalyzes the transcription of DNA into RNA using the four ribonucleoside triphosphates as substrates. This is DNA-directed RNA polymerase subunit beta from Clostridium botulinum (strain Okra / Type B1).